The primary structure comprises 223 residues: uncharacterized protein (223 aa).

In terms of domain architecture, HTH tetR-type spans 11–71; the sequence is EATFESFIDA…YLLEKRQMKK (61 aa). Positions 34–53 form a DNA-binding region, H-T-H motif; the sequence is SVEDISRAAGYSKGAFYVHF.

This is an uncharacterized protein from Bacillus subtilis (strain 168).